A 312-amino-acid polypeptide reads, in one-letter code: Ribosomal RNA small subunit methyltransferase H (312 aa).

Residues 35 to 37 (GGH), aspartate 55, aspartate 101, and glutamine 108 each bind S-adenosyl-L-methionine. Positions 285–306 (ALKPSEHEVTENSRSRSSVLRV) are disordered. Residues 287 to 298 (KPSEHEVTENSR) are compositionally biased toward basic and acidic residues.

It belongs to the methyltransferase superfamily. RsmH family.

Its subcellular location is the cytoplasm. The catalysed reaction is cytidine(1402) in 16S rRNA + S-adenosyl-L-methionine = N(4)-methylcytidine(1402) in 16S rRNA + S-adenosyl-L-homocysteine + H(+). Specifically methylates the N4 position of cytidine in position 1402 (C1402) of 16S rRNA. In Aeromonas salmonicida (strain A449), this protein is Ribosomal RNA small subunit methyltransferase H.